Reading from the N-terminus, the 581-residue chain is Bestrophin-1 (581 aa).

The Cytoplasmic segment spans residues methionine 1–leucine 31. Alanine 10 is a Ca(2+) binding site. Residues leucine 32 to arginine 51 traverse the membrane as a helical segment. The Extracellular segment spans residues methionine 52 to valine 60. A helical membrane pass occupies residues isoleucine 61–leucine 82. Topologically, residues glycine 83 to threonine 237 are cytoplasmic. The helical transmembrane segment at glutamine 238–arginine 255 threads the bilayer. Topologically, residues glutamine 256–proline 274 are extracellular. A helical membrane pass occupies residues leucine 275–leucine 288. The Cytoplasmic segment spans residues lysine 289–serine 581. Positions 293, 296, 301, and 304 each coordinate Ca(2+). The segment at glutamate 416–serine 440 is disordered.

This sequence belongs to the anion channel-forming bestrophin (TC 1.A.46) family. Calcium-sensitive chloride channel subfamily. As to quaternary structure, interacts with YWHAG; this interaction promotes the ligand-gated L-glutamate channel activity leading to the positive regulation of NMDA glutamate receptor activity through the L-glutamate secretion. Phosphorylated (in vitro). Post-translationally, dephosphorylated (in vitro) by PP2A.

It localises to the cell membrane. The protein localises to the basolateral cell membrane. The catalysed reaction is chloride(in) = chloride(out). The enzyme catalyses hydrogencarbonate(in) = hydrogencarbonate(out). It carries out the reaction 4-aminobutanoate(in) = 4-aminobutanoate(out). It catalyses the reaction L-glutamate(out) = L-glutamate(in). Ligand-gated anion channel that allows the movement of anions across cell membranes when activated by calcium (Ca2+). Allows the movement of chloride and hydrogencarbonate. Found in a partially open conformation leading to significantly smaller chloride movement. Upon F2R/PAR-1 activation, the sequestered calcium is released into the cytosol of astrocytes, leading to the (Ca2+)-dependent release of L-glutamate into the synaptic cleft that targets the neuronal postsynaptic GRIN2A/NMDAR receptor resulting in the synaptic plasticity regulation. Upon activation of the norepinephrine-alpha-1 adrenergic receptor signaling pathway, transports as well D-serine than L-glutamate in a (Ca2+)-dependent manner, leading to activation of adjacent NMDAR receptors and therefore regulates the heterosynaptic long-term depression and metaplasticity during initial memory acquisition. Releases the 4-aminobutanoate neurotransmitter in a (Ca2+)-dependent manner, and participates in its tonic release from cerebellar glial cells. This is Bestrophin-1 from Sus scrofa (Pig).